The sequence spans 408 residues: Probable 2,3-bisphosphoglycerate-independent phosphoglycerate mutase (408 aa).

This sequence belongs to the BPG-independent phosphoglycerate mutase family. A-PGAM subfamily.

The catalysed reaction is (2R)-2-phosphoglycerate = (2R)-3-phosphoglycerate. It participates in carbohydrate degradation; glycolysis; pyruvate from D-glyceraldehyde 3-phosphate: step 3/5. Catalyzes the interconversion of 2-phosphoglycerate and 3-phosphoglycerate. The chain is Probable 2,3-bisphosphoglycerate-independent phosphoglycerate mutase from Deinococcus geothermalis (strain DSM 11300 / CIP 105573 / AG-3a).